Reading from the N-terminus, the 747-residue chain is Pentatricopeptide repeat-containing protein At5g39710 (747 aa).

PPR repeat units lie at residues 133–167 (TSSVFDLVVKSYSRLSLIDKALSIVHLAQAHGFMP), 168–203 (GVLSYNAVLDATIRSKRNISFAENVFKEMLESQVSP), 204–238 (NVFTYNILIRGFCFAGNIDVALTLFDKMETKGCLP), 239–273 (NVVTYNTLIDGYCKLRKIDDGFKLLRSMALKGLEP), 274–308 (NLISYNVVINGLCREGRMKEVSFVLTEMNRRGYSL), 309–343 (DEVTYNTLIKGYCKEGNFHQALVMHAEMLRHGLTP), 344–378 (SVITYTSLIHSMCKAGNMNRAMEFLDQMRVRGLCP), 379–413 (NERTYTTLVDGFSQKGYMNEAYRVLREMNDNGFSP), 414–448 (SVVTYNALINGHCVTGKMEDAIAVLEDMKEKGLSP), 449–483 (DVVSYSTVLSGFCRSYDVDEALRVKREMVEKGIKP), 484–518 (DTITYSSLIQGFCEQRRTKEACDLYEEMLRVGLPP), 519–553 (DEFTYTALINAYCMEGDLEKALQLHNEMVEKGVLP), 554–588 (DVVTYSVLINGLNKQSRTREAKRLLLKLFYEESVP), 604–638 (EFKSVVSLIKGFCMKGMMTEADQVFESMLGKNHKP), and 639–673 (DGTAYNIMIHGHCRAGDIRKAYTLYKEMVKSGFLL).

Belongs to the PPR family. P subfamily.

The sequence is that of Pentatricopeptide repeat-containing protein At5g39710 (EMB2745) from Arabidopsis thaliana (Mouse-ear cress).